Consider the following 84-residue polypeptide: Protein Tlp homolog (84 aa).

A disordered region spans residues 1–20 (MGKEERYTKKPKPDDRSDNV).

This sequence belongs to the Tlp family.

This is Protein Tlp homolog from Caldanaerobacter subterraneus subsp. tengcongensis (strain DSM 15242 / JCM 11007 / NBRC 100824 / MB4) (Thermoanaerobacter tengcongensis).